The sequence spans 244 residues: Troponin I, cardiac muscle (244 aa).

Residues 1-25 (MSDEEEVTYEEEEEEYVEEEEEEVV) are compositionally biased toward acidic residues. Positions 1-67 (MSDEEEVTYE…PQVKRKPKIS (67 aa)) are disordered. N-acetylserine is present on S2. S2 carries the phosphoserine; by CK2 modification. The segment covering 27-42 (PEPPKPAPPPAAPPPL) has biased composition (pro residues).

This sequence belongs to the troponin I family. In terms of assembly, binds to actin and tropomyosin. Heart.

Functionally, troponin I is the inhibitory subunit of troponin, the thin filament regulatory complex which confers calcium-sensitivity to striated muscle actomyosin ATPase activity. The sequence is that of Troponin I, cardiac muscle (tnni3) from Xenopus laevis (African clawed frog).